The sequence spans 308 residues: UDP-3-O-acyl-N-acetylglucosamine deacetylase (308 aa).

Zn(2+) contacts are provided by histidine 78, histidine 235, and aspartate 239. Catalysis depends on histidine 262, which acts as the Proton donor.

It belongs to the LpxC family. The cofactor is Zn(2+).

It carries out the reaction a UDP-3-O-[(3R)-3-hydroxyacyl]-N-acetyl-alpha-D-glucosamine + H2O = a UDP-3-O-[(3R)-3-hydroxyacyl]-alpha-D-glucosamine + acetate. It functions in the pathway glycolipid biosynthesis; lipid IV(A) biosynthesis; lipid IV(A) from (3R)-3-hydroxytetradecanoyl-[acyl-carrier-protein] and UDP-N-acetyl-alpha-D-glucosamine: step 2/6. Catalyzes the hydrolysis of UDP-3-O-myristoyl-N-acetylglucosamine to form UDP-3-O-myristoylglucosamine and acetate, the committed step in lipid A biosynthesis. The polypeptide is UDP-3-O-acyl-N-acetylglucosamine deacetylase (Anaeromyxobacter dehalogenans (strain 2CP-C)).